Here is a 367-residue protein sequence, read N- to C-terminus: MTSRNYLLLTPGPLTTSRTVKEAMLFDSCTWDDDYNLGVVQTIRQQLVQLATPADGYTAVLLQGSGSYAVEAVLGSVIGEQGKVLIVSNGAYGARMIEMAQLMGIACHPYDCGEVSRPDAAAIEQILQNDPAITHIAMVHSETTTGMLNPIEEVAELAKRYDKRYIVDAMSSFGGIPLDIAALNIDYLISSANKCIQGVPGFAFVIAREAELAACKGRSRSLSLDLYAQWRCMEDNHGKWRFTSPTHTVLAFAQALKELAQEGGVSARHQRYRNNQRRLVAGMRALGFRPLLDDSLHSPIITAFYSPDAPQYRFHTFYQKLKDQGFVIYPGKVSQSDCFRIGNIGEVYDADITALLAAIDNAMYWKQ.

Lys-194 is subject to N6-(pyridoxal phosphate)lysine.

The protein belongs to the class-V pyridoxal-phosphate-dependent aminotransferase family. PhnW subfamily. Homodimer. Pyridoxal 5'-phosphate is required as a cofactor.

It catalyses the reaction (2-aminoethyl)phosphonate + pyruvate = phosphonoacetaldehyde + L-alanine. In terms of biological role, involved in phosphonate degradation. In Klebsiella pneumoniae subsp. pneumoniae (strain ATCC 700721 / MGH 78578), this protein is 2-aminoethylphosphonate--pyruvate transaminase.